Here is a 501-residue protein sequence, read N- to C-terminus: Solute carrier family 2, facilitated glucose transporter member 5 (501 aa).

Met1 is subject to N-acetylmethionine. The Cytoplasmic segment spans residues Met1–Ala18. Residues Leu19–Val39 traverse the membrane as a helical segment. Tyr32 contributes to the D-fructose binding site. Residues Asn40 to Thr68 lie on the Extracellular side of the membrane. Residue Asn51 is glycosylated (N-linked (GlcNAc...) asparagine). A helical transmembrane segment spans residues Leu69–Pro91. At Leu92–Arg98 the chain is on the cytoplasmic side. The helical transmembrane segment at Lys99–Ser119 threads the bilayer. At Lys120–Glu126 the chain is on the extracellular side. The chain crosses the membrane as a helical span at residues Met127–Tyr149. At Leu150–Ala161 the chain is on the cytoplasmic side. The chain crosses the membrane as a helical span at residues Leu162–Leu182. Gln167 provides a ligand contact to D-fructose. At Arg183–Trp192 the chain is on the extracellular side. The chain crosses the membrane as a helical span at residues Pro193–Phe213. Topologically, residues Pro214 to Gln277 are cytoplasmic. A helical transmembrane segment spans residues Val278–Tyr298. Residues Gln288 and Ile296 to Tyr298 contribute to the D-fructose site. At Tyr299–Asp313 the chain is on the extracellular side. A helical membrane pass occupies residues Val314–Phe334. Residues Val335 to Arg342 are Cytoplasmic-facing. A helical transmembrane segment spans residues Ala343–Leu363. At Ala364–Trp371 the chain is on the extracellular side. The chain crosses the membrane as a helical span at residues Met372–Ile394. Residue His387 coordinates D-fructose. Topologically, residues Pro395 to Tyr412 are cytoplasmic. A helical membrane pass occupies residues Met413–Ile433. His419–Trp420 lines the D-fructose pocket. Over Gln434–Ala439 the chain is Extracellular. The helical transmembrane segment at Tyr440–Val460 threads the bilayer. Residues Pro461–Leu501 lie on the Cytoplasmic side of the membrane.

It belongs to the major facilitator superfamily. Sugar transporter (TC 2.A.1.1) family. Glucose transporter subfamily.

It localises to the apical cell membrane. The protein localises to the cell membrane. Its subcellular location is the sarcolemma. The enzyme catalyses D-fructose(out) = D-fructose(in). Functions as a fructose transporter that has only low activity with other monosaccharides. Can mediate the uptake of deoxyglucose, but with low efficiency. Essential for fructose uptake in the small intestine. Plays a role in the regulation of salt uptake and blood pressure in response to dietary fructose. Required for the development of high blood pressure in response to high dietary fructose intake. This chain is Solute carrier family 2, facilitated glucose transporter member 5, found in Equus caballus (Horse).